The following is a 166-amino-acid chain: Large ribosomal subunit protein bL9 (166 aa).

The protein belongs to the bacterial ribosomal protein bL9 family.

In terms of biological role, binds to the 23S rRNA. This is Large ribosomal subunit protein bL9 from Borrelia garinii subsp. bavariensis (strain ATCC BAA-2496 / DSM 23469 / PBi) (Borreliella bavariensis).